A 476-amino-acid polypeptide reads, in one-letter code: Argininosuccinate lyase (476 aa).

It belongs to the lyase 1 family. Argininosuccinate lyase subfamily.

The protein resides in the cytoplasm. The enzyme catalyses 2-(N(omega)-L-arginino)succinate = fumarate + L-arginine. It participates in amino-acid biosynthesis; L-arginine biosynthesis; L-arginine from L-ornithine and carbamoyl phosphate: step 3/3. In Gluconacetobacter diazotrophicus (strain ATCC 49037 / DSM 5601 / CCUG 37298 / CIP 103539 / LMG 7603 / PAl5), this protein is Argininosuccinate lyase.